A 125-amino-acid polypeptide reads, in one-letter code: Anticoagulant salivary protein 14 (125 aa).

The signal sequence occupies residues 1–21 (MGLTGTMLVLVSLAFFGSAAA). Asparagine 26, asparagine 81, and asparagine 87 each carry an N-linked (GlcNAc...) asparagine glycan. Residues 75–86 (GECHLTNNSGGP) show a composition bias toward polar residues. Residues 75–125 (GECHLTNNSGGPNETDDYTPAPTEKPKQKKKKTKKTKKPKRKSKKDQEKNL) are disordered. Residues 91–125 (DYTPAPTEKPKQKKKKTKKTKKPKRKSKKDQEKNL) are responsible for anticoagulant activity. The span at 101–118 (KQKKKKTKKTKKPKRKSK) shows a compositional bias: basic residues.

This sequence belongs to the salp14 family. In terms of tissue distribution, salivary gland (at protein level). Saliva (at protein level).

Its subcellular location is the secreted. Salivary anticoagulant protein that facilitates blood feeding of adult ticks on vertebrate species. Inhibits host coagulation factor Xa (F10). Blocks the assembly and/or early activity of the prothrombinase complex (Xa-Va/F10-F5). Inhibits the lectin pathway of complement system activation in the host. In Ixodes scapularis (Black-legged tick), this protein is Anticoagulant salivary protein 14.